The following is a 351-amino-acid chain: DNA polymerase IV (351 aa).

One can recognise a UmuC domain in the interval 4–185; sequence IIHVDMDCFF…LPLAKIPGVG (182 aa). Mg(2+)-binding residues include Asp8 and Asp103. Glu104 is an active-site residue.

This sequence belongs to the DNA polymerase type-Y family. As to quaternary structure, monomer. It depends on Mg(2+) as a cofactor.

It localises to the cytoplasm. It catalyses the reaction DNA(n) + a 2'-deoxyribonucleoside 5'-triphosphate = DNA(n+1) + diphosphate. Its function is as follows. Poorly processive, error-prone DNA polymerase involved in untargeted mutagenesis. Copies undamaged DNA at stalled replication forks, which arise in vivo from mismatched or misaligned primer ends. These misaligned primers can be extended by PolIV. Exhibits no 3'-5' exonuclease (proofreading) activity. May be involved in translesional synthesis, in conjunction with the beta clamp from PolIII. The chain is DNA polymerase IV from Escherichia coli O139:H28 (strain E24377A / ETEC).